Here is a 286-residue protein sequence, read N- to C-terminus: ATP synthase gamma chain (286 aa).

It belongs to the ATPase gamma chain family. As to quaternary structure, F-type ATPases have 2 components, CF(1) - the catalytic core - and CF(0) - the membrane proton channel. CF(1) has five subunits: alpha(3), beta(3), gamma(1), delta(1), epsilon(1). CF(0) has three main subunits: a, b and c.

It is found in the cell inner membrane. Produces ATP from ADP in the presence of a proton gradient across the membrane. The gamma chain is believed to be important in regulating ATPase activity and the flow of protons through the CF(0) complex. The polypeptide is ATP synthase gamma chain (Christiangramia forsetii (strain DSM 17595 / CGMCC 1.15422 / KT0803) (Gramella forsetii)).